The following is an 834-amino-acid chain: Probable receptor-like protein kinase At2g23200 (834 aa).

An N-terminal signal peptide occupies residues 1–28 (MENFCFQDSVSLFITIMVLVLLPRLSLS). Residues 29 to 405 (DTSTYTRPEN…SSSRVHIITG (377 aa)) are Extracellular-facing. Asparagine 61, asparagine 149, asparagine 221, asparagine 246, asparagine 277, asparagine 289, asparagine 314, asparagine 352, asparagine 361, and asparagine 394 each carry an N-linked (GlcNAc...) asparagine glycan. The chain crosses the membrane as a helical span at residues 406-426 (CAVAAAAASALVFSLLFMVFL). The Cytoplasmic portion of the chain corresponds to 427-834 (KRRRSKKTKP…FSQLKISDAR (408 aa)). One can recognise a Protein kinase domain in the interval 488–761 (FDEQLLIGKG…RDVIWDLEYV (274 aa)). Residues 494–502 (IGKGGFGYV) and lysine 516 each bind ATP. Catalysis depends on aspartate 613, which acts as the Proton acceptor.

It belongs to the protein kinase superfamily. Ser/Thr protein kinase family.

Its subcellular location is the membrane. The chain is Probable receptor-like protein kinase At2g23200 from Arabidopsis thaliana (Mouse-ear cress).